Reading from the N-terminus, the 206-residue chain is Small ribosomal subunit protein uS4 (206 aa).

Residues 96–156 (GRLDNVVYRM…EKAKKQARIK (61 aa)) form the S4 RNA-binding domain.

The protein belongs to the universal ribosomal protein uS4 family. In terms of assembly, part of the 30S ribosomal subunit. Contacts protein S5. The interaction surface between S4 and S5 is involved in control of translational fidelity.

One of the primary rRNA binding proteins, it binds directly to 16S rRNA where it nucleates assembly of the body of the 30S subunit. Its function is as follows. With S5 and S12 plays an important role in translational accuracy. This is Small ribosomal subunit protein uS4 from Tolumonas auensis (strain DSM 9187 / NBRC 110442 / TA 4).